The chain runs to 213 residues: 24 kDa ookinete surface protein (213 aa).

Residues 1–28 (MNFKYSFIFLFFIQLAIRYNNAKITVDT) form the signal peptide. The 30-residue stretch at 30–59 (CKGGKLIQMSNHYECKCPSGYALKTENTCE) folds into the EGF-like 1; truncated domain. EGF-like domains are found at residues 60 to 108 (PIVK…NICK) and 108 to 148 (KPTR…GKCT). 6 disulfides stabilise this stretch: cysteine 64/cysteine 80, cysteine 74/cysteine 94, cysteine 96/cysteine 107, cysteine 112/cysteine 122, cysteine 117/cysteine 134, and cysteine 136/cysteine 147. The 25-residue stretch at 151 to 175 (GETKCLLKCKAAEECKLTGKHYECV) folds into the EGF-like 4; truncated domain. Residue asparagine 190 is the site of GPI-anchor amidated asparagine attachment. N-linked (GlcNAc...) asparagine glycosylation is present at asparagine 190. Residues 191–213 (SSFMNGMSIISIIALLVIYVIVM) constitute a propeptide, removed in mature form.

It localises to the cell membrane. The chain is 24 kDa ookinete surface protein from Plasmodium berghei (strain Anka).